We begin with the raw amino-acid sequence, 464 residues long: GTPase Der (464 aa).

EngA-type G domains are found at residues Pro3–Glu166 and Ile178–Phe351. GTP contacts are provided by residues Gly9–Ser16, Asp56–Leu60, Asn118–Asp121, Gly184–Ser191, Asp231–Val235, and Asn296–Asp299. The KH-like domain occupies Ile352–Glu436.

This sequence belongs to the TRAFAC class TrmE-Era-EngA-EngB-Septin-like GTPase superfamily. EngA (Der) GTPase family. Associates with the 50S ribosomal subunit.

In terms of biological role, GTPase that plays an essential role in the late steps of ribosome biogenesis. The chain is GTPase Der from Thioalkalivibrio sulfidiphilus (strain HL-EbGR7).